Consider the following 93-residue polypeptide: Small ribosomal subunit protein bS16 (93 aa).

It belongs to the bacterial ribosomal protein bS16 family.

The polypeptide is Small ribosomal subunit protein bS16 (Roseiflexus castenholzii (strain DSM 13941 / HLO8)).